The primary structure comprises 319 residues: DNA-directed RNA polymerases II, IV and V subunit 3 (319 aa).

Methionine 1 carries the N-acetylmethionine modification.

The protein belongs to the archaeal Rpo3/eukaryotic RPB3 RNA polymerase subunit family. In terms of assembly, component of the RNA polymerase II complex consisting of at least 12 subunits. Interacts with SHH1, CLSY1, NRPB11 and NRPD1. Interacts with IYO.

The protein localises to the nucleus. In terms of biological role, DNA-dependent RNA polymerase catalyzes the transcription of DNA into RNA using the four ribonucleoside triphosphates as substrates. Component of RNA polymerase II which synthesizes mRNA precursors and many functional non-coding RNAs. Pol II is the central component of the basal RNA polymerase II transcription machinery. It is composed of mobile elements that move relative to each other. NRPB3 is part of the core element with the central large cleft and the clamp element that moves to open and close the cleft. Component of RNA polymerases IV and V which mediate short-interfering RNAs (siRNA) accumulation and subsequent RNA-directed DNA methylation-dependent (RdDM) transcriptional gene silencing (TGS) of endogenous repeated sequences, including transposable elements. This is DNA-directed RNA polymerases II, IV and V subunit 3 (NRPB3) from Arabidopsis thaliana (Mouse-ear cress).